The chain runs to 811 residues: Probable glutamine--tRNA ligase (811 aa).

Residues 190–217 form a disordered region; sequence DAAAGKKKGAKAKNSKQKTVDSGKAKEQ. Residues 194–205 are compositionally biased toward basic residues; the sequence is GKKKGAKAKNSK. The span at 207–217 shows a compositional bias: basic and acidic residues; the sequence is KTVDSGKAKEQ. The 'HIGH' region signature appears at 269-279; sequence PEPNGYLHIGH. Residues 270–272 and 276–282 each bind ATP; these read EPN and HIGHSKA. Residues aspartate 302 and tyrosine 447 each coordinate L-glutamine. Residues threonine 466, 495–496, and 503–505 contribute to the ATP site; these read RL and MSK. The short motif at 502–506 is the 'KMSKS' region element; the sequence is LMSKR.

It belongs to the class-I aminoacyl-tRNA synthetase family.

Its subcellular location is the cytoplasm. The enzyme catalyses tRNA(Gln) + L-glutamine + ATP = L-glutaminyl-tRNA(Gln) + AMP + diphosphate. This chain is Probable glutamine--tRNA ligase (qrs1), found in Schizosaccharomyces pombe (strain 972 / ATCC 24843) (Fission yeast).